A 247-amino-acid chain; its full sequence is MSDSPLIAFPRGCITGTFIRRVKRFSVEMETAGAGAPERVWIHSNNSGSMLGLLRAGAPVLASPAANPARKLKWTQELAGLDGMWVGVNTQTPNRLLEAAFHAGRLPWAAGYTMFRREARCGASRLDARMDAPQDSGLPPLWVECKNVTMVEDDVAAFPDAATERGQKHLREMMEIVRQGQRAAMFYLVQRADGHCFGPADYVDPVYAGLFYEAAAAGVEMYPHRALVSEHGIDLGPLLPVVPPPGV.

It belongs to the SfsA family.

The protein is Sugar fermentation stimulation protein homolog of Oleidesulfovibrio alaskensis (strain ATCC BAA-1058 / DSM 17464 / G20) (Desulfovibrio alaskensis).